We begin with the raw amino-acid sequence, 237 residues long: MIPRHVAIVMDGNGRWANRRGLPRVAGHRAGAKVVRRIVEYAAEKPLEVLTLFAFSIENRARPQSEVNFLMSLFLDSLKKNTEELHKNNVQLRVIGDHREFDKKMLAQIQTSQDLTKHNTGLKLIIALNYSGRWDILQAVQRMAEKIKNQELTSELMSAELFQNYLCLSDLPEPDLLIRTSGEQRLSNFMLWQFAYTEIYFTPALWPDFNEETFDQALAFYRTRQRRFGLTPEQVEK.

The active site involves D11. D11 contributes to the Mg(2+) binding site. Residues G12–R15, W16, R24, H28, and S56–E58 contribute to the substrate site. The Proton acceptor role is filled by N59. Residues R62, R179, and R185–S187 each bind substrate. Residue E198 participates in Mg(2+) binding.

Belongs to the UPP synthase family. In terms of assembly, homodimer. The cofactor is Mg(2+).

It catalyses the reaction 8 isopentenyl diphosphate + (2E,6E)-farnesyl diphosphate = di-trans,octa-cis-undecaprenyl diphosphate + 8 diphosphate. Catalyzes the sequential condensation of isopentenyl diphosphate (IPP) with (2E,6E)-farnesyl diphosphate (E,E-FPP) to yield (2Z,6Z,10Z,14Z,18Z,22Z,26Z,30Z,34E,38E)-undecaprenyl diphosphate (di-trans,octa-cis-UPP). UPP is the precursor of glycosyl carrier lipid in the biosynthesis of bacterial cell wall polysaccharide components such as peptidoglycan and lipopolysaccharide. In Coxiella burnetii (strain RSA 493 / Nine Mile phase I), this protein is Ditrans,polycis-undecaprenyl-diphosphate synthase ((2E,6E)-farnesyl-diphosphate specific).